Reading from the N-terminus, the 1476-residue chain is ABC-type transporter frbG (1476 aa).

Transmembrane regions (helical) follow at residues 26–46, 64–84, 97–117, 122–142, and 146–166; these read LLFE…VLAL, LYYA…VQLI, SIAI…LCHL, SAKP…FDII, and TLWI…GLVL. Residue Asn244 is glycosylated (N-linked (GlcNAc...) asparagine). The next 4 helical transmembrane spans lie at 266 to 286, 302 to 322, 380 to 400, and 409 to 429; these read FLAG…QPFL, AGAT…GIAI, LQTM…TWLL, and IPSV…AVMA. Positions 274–553 constitute an ABC transmembrane type-1 1 domain; it reads LALTGFTFAQ…FVHSAVNLML (280 aa). The N-linked (GlcNAc...) asparagine glycan is linked to Asn464. The next 2 membrane-spanning stretches (helical) occupy residues 487–507 and 533–553; these read CLVF…IIGF and IFAL…NLML. Residues 619–845 form the ABC transporter 1 domain; that stretch reads IQARDTNIGW…VTAHVHNQTS (227 aa). 652–659 serves as a coordination point for ATP; the sequence is GPTNSGKS. N-linked (GlcNAc...) asparagine glycans are attached at residues Asn694, Asn776, Asn805, and Asn842. 5 helical membrane-spanning segments follow: residues 898-918, 936-956, 1017-1037, 1121-1141, and 1151-1171; these read AVFL…SIWV, YLLV…GGGS, LFAF…SPFV, LGLV…IVIV, and GFLG…GGFI. An ABC transmembrane type-1 2 domain is found at 898–1179; sequence AVFLALCMAL…FIGGWTGLET (282 aa). In terms of domain architecture, ABC transporter 2 spans 1216–1447; it reads IVFDDVTASY…LSSSSPTSSP (232 aa). Residue Asn1235 is glycosylated (N-linked (GlcNAc...) asparagine). 1250–1257 contacts ATP; the sequence is GRTGSGKS.

This sequence belongs to the ABC transporter superfamily. ABCC family. Conjugate transporter (TC 3.A.1.208) subfamily.

The protein localises to the cell membrane. ABC-type transporter; part of the gene cluster that mediates the biosynthesis of the antifungal antibiotic FR901469, an inhibitor of beta-1,3-glucansynthase, exerting antifungal activity against the pathogenes Candida albicans and Aspergillus fumigatus. FR901469 is a cyclic depsipeptide containing 12 amino acid residues and a fatty acid chain. Probably involved in the secretion of FR901469. The protein is ABC-type transporter frbG of Dothideomycetidae sp. (strain 11243) (Fungal sp. (strain No.11243)).